Consider the following 368-residue polypeptide: Phenylalanine--tRNA ligase alpha subunit (368 aa).

Glu268 is a Mg(2+) binding site.

The protein belongs to the class-II aminoacyl-tRNA synthetase family. Phe-tRNA synthetase alpha subunit type 1 subfamily. In terms of assembly, tetramer of two alpha and two beta subunits. Requires Mg(2+) as cofactor.

It is found in the cytoplasm. It catalyses the reaction tRNA(Phe) + L-phenylalanine + ATP = L-phenylalanyl-tRNA(Phe) + AMP + diphosphate + H(+). The polypeptide is Phenylalanine--tRNA ligase alpha subunit (Nitrobacter hamburgensis (strain DSM 10229 / NCIMB 13809 / X14)).